The following is a 217-amino-acid chain: Cytidylate kinase (217 aa).

ATP is bound at residue 11-19 (GPAGAGKST).

This sequence belongs to the cytidylate kinase family. Type 1 subfamily.

It is found in the cytoplasm. It catalyses the reaction CMP + ATP = CDP + ADP. The catalysed reaction is dCMP + ATP = dCDP + ADP. This is Cytidylate kinase from Clostridium perfringens (strain ATCC 13124 / DSM 756 / JCM 1290 / NCIMB 6125 / NCTC 8237 / Type A).